We begin with the raw amino-acid sequence, 1363 residues long: Spike glycoprotein (1363 aa).

A signal peptide spans 1 to 13; the sequence is MFLILLISLPTAF. Over 14 to 1307 the chain is Extracellular; that stretch reads AVIGDLKCTT…GTYEYYVKWP (1294 aa). A BetaCoV S1-NTD domain is found at 15–298; that stretch reads VIGDLKCTTV…DFMSEIKCKT (284 aa). 5 disulfide bridges follow: C21–C165, C160–C193, C172–C252, C286–C296, and C331–C356. N-linked (GlcNAc...) asparagine; by host glycans are attached at residues N59 and N133. Residue N198 is glycosylated (N-linked (GlcNAc...) asparagine; by host). A BetaCoV S1-CTD domain is found at 329 to 617; it reads PDCNIEAWLN…DVNSGTTCST (289 aa). N359 carries an N-linked (GlcNAc...) asparagine; by host glycan. 2 disulfide bridges follow: C374/C427 and C386/C615. N437, N649, N676, N696, N714, N739, and N788 each carry an N-linked (GlcNAc...) asparagine; by host glycan. 2 fusion peptide regions span residues 914–935 and 933–953; these read SAIE…VEAY and EAYN…VQSY. N-linked (GlcNAc...) asparagine; by host glycosylation is present at N937. C938 and C949 are joined by a disulfide. Positions 1014 to 1064 are heptad repeat 1; it reads QKLIANAFNNALGAIQEGFDATNSALVKIQAVVNANAEALNNLLQQLSNRF. Residues 1043-1087 are a coiled coil; it reads QAVVNANAEALNNLLQQLSNRFGAISSSLQEILSRLDALEAQAQI. Residues N1194, N1224, N1234, N1253, N1267, and N1288 are each glycosylated (N-linked (GlcNAc...) asparagine; by host). Positions 1258–1296 are heptad repeat 2; that stretch reads APDLSLDYINVTFLDLQDEMNRLQEAIKVLNQSYINLKD. The stretch at 1269–1297 forms a coiled coil; sequence TFLDLQDEMNRLQEAIKVLNQSYINLKDI. A helical membrane pass occupies residues 1308 to 1328; sequence WYVWLLIGFAGVAMLVLLFFI. Residues 1329-1363 are Cytoplasmic-facing; it reads CCCTGCGTSCFKKCGGCCDDYTGHQELVIKTSHED. The KxHxx motif lies at 1359–1363; that stretch reads TSHED.

It belongs to the betacoronaviruses spike protein family. Homotrimer; each monomer consists of a S1 and a S2 subunit. The resulting peplomers protrude from the virus surface as spikes. Post-translationally, specific enzymatic cleavages in vivo yield mature proteins. The precursor is processed into S1 and S2 by host cell furin or another cellular protease to yield the mature S1 and S2 proteins. Additionally, a second cleavage leads to the release of a fusion peptide after viral attachment to host cell receptor. The cytoplasmic Cys-rich domain is palmitoylated. Spike glycoprotein is digested within host endosomes.

The protein localises to the virion membrane. The protein resides in the host endoplasmic reticulum-Golgi intermediate compartment membrane. Its subcellular location is the host cell membrane. Its function is as follows. Attaches the virion to the cell membrane by interacting with host receptor, initiating the infection. Mediates fusion of the virion and cellular membranes by acting as a class I viral fusion protein. Under the current model, the protein has at least three conformational states: pre-fusion native state, pre-hairpin intermediate state, and post-fusion hairpin state. During viral and target cell membrane fusion, the coiled coil regions (heptad repeats) assume a trimer-of-hairpins structure, positioning the fusion peptide in close proximity to the C-terminal region of the ectodomain. The formation of this structure appears to drive apposition and subsequent fusion of viral and target cell membranes. Functionally, acts as a viral fusion peptide which is unmasked following S2 cleavage occurring upon virus endocytosis. The polypeptide is Spike glycoprotein (Bovine coronavirus (strain 98TXSF-110-ENT) (BCoV-ENT)).